The sequence spans 346 residues: Serpentine receptor class beta-11 (346 aa).

Transmembrane regions (helical) follow at residues 26–46 (YQMIISFCSVFPLIYFLLFKL), 57–77 (TIFISYFVSLVAFSMTHLTTS), 102–122 (IWNFFILFFLTLSTFFPCSVT), 139–159 (SVVMGPILVGFNVLLNFCIIF), 186–206 (FTFFIIIFFVNLVDVIFDLIL), 239–259 (VFLILIHIISFGIYVSAVVFF), and 278–298 (TFSTTIVPTYNFVIGSFSSFF).

This sequence belongs to the nematode receptor-like protein srb family.

Its subcellular location is the membrane. The chain is Serpentine receptor class beta-11 (srb-11) from Caenorhabditis elegans.